Here is a 593-residue protein sequence, read N- to C-terminus: Aspartate--tRNA ligase (593 aa).

Glu-180 is an L-aspartate binding site. The aspartate stretch occupies residues 204–207; that stretch reads QIFK. L-aspartate is bound at residue Arg-226. ATP contacts are provided by residues 226–228 and Gln-235; that span reads RDE. Residue His-453 coordinates L-aspartate. Glu-487 contacts ATP. Arg-494 serves as a coordination point for L-aspartate. 539 to 542 contacts ATP; the sequence is GLDR.

This sequence belongs to the class-II aminoacyl-tRNA synthetase family. Type 1 subfamily. As to quaternary structure, homodimer.

It localises to the cytoplasm. It carries out the reaction tRNA(Asp) + L-aspartate + ATP = L-aspartyl-tRNA(Asp) + AMP + diphosphate. Catalyzes the attachment of L-aspartate to tRNA(Asp) in a two-step reaction: L-aspartate is first activated by ATP to form Asp-AMP and then transferred to the acceptor end of tRNA(Asp). This is Aspartate--tRNA ligase from Clostridium botulinum (strain 657 / Type Ba4).